The following is a 277-amino-acid chain: Probable endonuclease 4 (277 aa).

Zn(2+)-binding residues include H70, H108, E143, D176, H179, H210, D223, H225, and E255.

The protein belongs to the AP endonuclease 2 family. Zn(2+) serves as cofactor.

It catalyses the reaction Endonucleolytic cleavage to 5'-phosphooligonucleotide end-products.. In terms of biological role, endonuclease IV plays a role in DNA repair. It cleaves phosphodiester bonds at apurinic or apyrimidinic (AP) sites, generating a 3'-hydroxyl group and a 5'-terminal sugar phosphate. The protein is Probable endonuclease 4 of Mycoplasmopsis synoviae (strain 53) (Mycoplasma synoviae).